We begin with the raw amino-acid sequence, 774 residues long: Lon protease 2 (774 aa).

Residues 5-198 (YPLMPLRDIV…LLLEILFREL (194 aa)) form the Lon N-terminal domain. Position 350–357 (350–357 (GPPGVGKT)) interacts with ATP. In terms of domain architecture, Lon proteolytic spans 588–769 (RDEVGLATGL…DQVLEQALLS (182 aa)). Active-site residues include Ser-675 and Lys-718.

The protein belongs to the peptidase S16 family. Homohexamer. Organized in a ring with a central cavity.

The protein localises to the cytoplasm. It carries out the reaction Hydrolysis of proteins in presence of ATP.. Functionally, ATP-dependent serine protease that mediates the selective degradation of mutant and abnormal proteins as well as certain short-lived regulatory proteins. Required for cellular homeostasis and for survival from DNA damage and developmental changes induced by stress. Degrades polypeptides processively to yield small peptide fragments that are 5 to 10 amino acids long. Binds to DNA in a double-stranded, site-specific manner. This Desulfotalea psychrophila (strain LSv54 / DSM 12343) protein is Lon protease 2.